Reading from the N-terminus, the 1233-residue chain is NACHT, LRR and PYD domains-containing protein 1b allele 1 (1233 aa).

The disordered stretch occupies residues 1 to 22 (MEESPPKQKSNTKVAQHEGQQD). Residues 126–435 (QLVIIEGAAG…EFFAAISCIL (310 aa)) enclose the NACHT domain. Position 132–139 (132–139 (GAAGIGKS)) interacts with ATP. 2 LRR repeats span residues 627-647 (NLEG…QSLC) and 684-704 (SLTE…RMLC). The tract at residues 850 to 983 (FWGPIGPVAT…GYTVLKNPSF (134 aa)) is ZU5. The region spanning 850–1133 (FWGPIGPVAT…LRPALPRIAQ (284 aa)) is the FIIND domain. The interval 984-1133 (SPMGVVLRII…LRPALPRIAQ (150 aa)) is UPA. In terms of domain architecture, CARD spans 1143-1226 (HFMDQHREQL…HLVMDLLEKS (84 aa)).

It belongs to the NLRP family. As to quaternary structure, interacts with DPP9; leading to inhibit activation of the inflammasome. DPP9 acts via formation of a ternary complex, composed of a DPP9 homodimer, one full-length Nlrp1b protein, and one cleaved C-terminus of Nlrp1b (NACHT, LRR and PYD domains-containing protein 1b, C-terminus). Interacts with DPP8; leading to inhibit activation of the inflammasome, probably via formation of a ternary complex with DPP8. Interacts (via LRR repeats) with BCL2 and BCL2L1 (via the loop between motifs BH4 and BH3). Interacts with NOD2; this interaction may increase IL1B release. Interacts with EIF2AK2/PKR; this interaction requires EIF2AK2 activity, is accompanied by EIF2AK2 autophosphorylation and promotes inflammasome assembly in response to B.anthracis lethal toxin. Interacts with MEFV; this interaction targets Nlrp1b to degradation by autophagy, hence preventing excessive IL1B- and IL18-mediated inflammation. Interacts with the C-terminal part of Nlrp1b (NACHT, LRR and PYD domains-containing protein 1b, C-terminus) in absence of pathogens and other damage-associated signals. In terms of assembly, interacts with the N-terminal part of Nlrp1b (NACHT, LRR and PYD domains-containing protein 1b, N-terminus) in absence of pathogens and other damage-associated signals. Homomultimer; forms the Nlrp1b inflammasome polymeric complex, a filament composed of homopolymers of this form in response to pathogens and other damage-associated signals. The Nlrp1b inflammasome polymeric complex directly recruits pro-caspase-1 (proCASP1) independently of PYCARD/ASC. Interacts (via CARD domain) with CASP1 (via CARD domain); leading to CASP1 activation. In terms of processing, autocatalytically cleaved. Autocatalytic cleavage in FIIND region occurs constitutively, prior to activation signals, and is required for inflammasome activity (IL1B release), possibly by facilitating CASP1 binding. Both N- and C-terminal parts remain associated non-covalently. Post-translationally, ubiquitinated by UBR2, a component of the N-end rule pathway in response to pathogens and other damage-associated signals, leading to its degradation by the proteasome and subsequent release of the cleaved C-terminal part of the protein (NACHT, LRR and PYD domains-containing protein 1b, C-terminus), which polymerizes and forms the Nlrp1b inflammasome. (Microbial infection) Cleavage by B.anthracis lethal toxin (LT) endopeptidase promotes ubiquitination and degradation of the N-terminal part, releasing the cleaved C-terminal part of the protein (NACHT, LRR and PYD domains-containing protein 1b, C-terminus), which polymerizes and forms the Nlrp1b inflammasome. In terms of processing, (Microbial infection) Ubiquitinated by S.flexneri IpaH7.8, leading to its degradation by the proteasome and subsequent release of the cleaved C-terminal part of the protein (NACHT, LRR and PYD domains-containing protein 1b, C-terminus), which polymerizes and forms the Nlrp1b inflammasome. Widely expressed, including in macrophages.

It localises to the cytoplasm. It is found in the cytosol. The protein localises to the membrane. Its subcellular location is the inflammasome. Its activity is regulated as follows. Activated by cleavage by B.anthracis lethal toxin (LT) endopeptidase: cleavage by LT promotes ubiquitination and degradation of the N-terminal part, releasing the cleaved C-terminal part of the protein (NACHT, LRR and PYD domains-containing protein 1b, C-terminus), which polymerizes and forms the Nlrp1b inflammasome. Activated by S.flexneri IpaH7.8, an E3 ubiquitin ligase that mediates ubiquitination and degradation of the N-terminal part, releasing the cleaved C-terminal part of the protein, which polymerizes and forms the Nlrp1b inflammasome. Nlrp1b inflammasome is inhibited by DPP8 and DPP9, which sequester the C-terminal fragment of Nlrp1b (NACHT, LRR and PYD domains-containing protein 1b, C-terminus) in a ternary complex, thereby preventing Nlrp1b oligomerization and activation. Nlrp1b inflammasome is activated by Val-boroPro (Talabostat, PT-100), an inhibitor of dipeptidyl peptidases DPP8 and DPP9. Val-boroPro relieves inhibition of DPP8 and/or DPP9 by promoting disruption of the ternary complex, releasing its C-terminal part from autoinhibition. Activated by metabolic inhibitors, such as 2-deoxy-D-glucose and sodium azide, by nutrient deprivation and hypoxia, possibly due to a decrease in cytosolic ATP. Also activated by Toxoplasma gondii. Not activated by muramyl dipeptide, nor by full-length bacterial peptidoglycan. Contrary to its human ortholog, not activated by positive-strand RNA virus such as Semliki Forrest virus or long dsRNA. Functionally, acts as the sensor component of the Nlrp1b inflammasome, which mediates inflammasome activation in response to various pathogen-associated signals, leading to subsequent pyroptosis. Inflammasomes are supramolecular complexes that assemble in the cytosol in response to pathogens and other damage-associated signals and play critical roles in innate immunity and inflammation. Acts as a recognition receptor (PRR): recognizes specific pathogens and other damage-associated signals, such as B.anthracis lethal toxin (LT) or Val-boroPro inhibitor, and mediates the formation of the inflammasome polymeric complex. In response to pathogen-associated signals, the N-terminal part of Nlrp1b is degraded by the proteasome, releasing the cleaved C-terminal part of the protein (NACHT, LRR and PYD domains-containing protein 1b, C-terminus), which polymerizes to initiate the formation of the inflammasome complex: the inflammasome directly recruits pro-caspase-1 (proCASP1) independently of PYCARD/ASC and promotes caspase-1 (CASP1) activation, which subsequently cleaves and activates inflammatory cytokines IL1B and IL18 and gasdermin-D (GSDMD), leading to pyroptosis. In the absence of GSDMD expression, the Nlrp1b inflammasome is able to recruit and activate CASP8, leading to activation of gasdermin-E (GSDME). Activation of Nlrp1b inflammasome is also required for HMGB1 secretion; the active cytokines and HMGB1 stimulate inflammatory responses. Primary mediator of macrophage susceptibility to B.anthracis LT: in response to B.anthracis infection, macrophages and dendritic cells release IL1B and undergo pyroptosis. This early inflammatory response to the toxin increases resistance to infection by B.anthracis spores. Its function is as follows. Constitutes the precursor of the Nlrp1b inflammasome, which mediates autoproteolytic processing within the FIIND domain to generate the N-terminal and C-terminal parts, which are associated non-covalently in absence of pathogens and other damage-associated signals. Regulatory part that prevents formation of the Nlrp1b inflammasome: in absence of pathogens and other damage-associated signals, interacts with the C-terminal part of Nlrp1b (NACHT, LRR and PYD domains-containing protein 1b, C-terminus), preventing activation of the Nlrp1b inflammasome. In response to pathogen-associated signals, this part is ubiquitinated by the N-end rule pathway and degraded by the proteasome, releasing the cleaved C-terminal part of the protein, which polymerizes and forms the Nlrp1b inflammasome. In terms of biological role, constitutes the active part of the Nlrp1b inflammasome. In absence of pathogens and other damage-associated signals, interacts with the N-terminal part of Nlrp1b (NACHT, LRR and PYD domains-containing protein 1b, N-terminus), preventing activation of the Nlrp1b inflammasome. In response to pathogen-associated signals, the N-terminal part of Nlrp1b is degraded by the proteasome, releasing this form, which polymerizes to form the Nlrp1b inflammasome complex: the Nlrp1b inflammasome complex then directly recruits pro-caspase-1 (proCASP1) and promotes caspase-1 (CASP1) activation, leading to gasdermin-D (GSDMD) cleavage and subsequent pyroptosis. This Mus musculus (Mouse) protein is NACHT, LRR and PYD domains-containing protein 1b allele 1.